Here is a 580-residue protein sequence, read N- to C-terminus: MPGWPWGLLLTAGTLFAALSPGPPAPADPCHDEGGAPRGCVPGLVNAALGREVLASSTCGRPATRACDASDPRRAHSPALLTSPGGTASPLCWRSESLPRAPLNVTLTVPLGKAFELVFVSLRFCSAPPASVALLKSQDHGRSWAPLGFFSSHCDLDYGRLPAPANGPAGPGPEALCFPAPLAQPDGSGLLAFSMQDSSPPGLDLDSSPVLQDWVTATDVRVVLTRPSTAGDPRDMEAVVPYSYAATDLQVGGRCKCNGHASRCLLDTQGHLICDCRHGTEGPDCGRCKPFYCDRPWQRATARESHACLACSCNGHARRCRFNMELYRLSGRRSGGVCLNCRHNTAGRHCHYCREGFYRDPGRALSDRRACRACDCHPVGAAGKTCNQTTGQCPCKDGVTGLTCNRCAPGFQQSRSPVAPCVKTPIPGPTEDSSPVQPQDCDSHCKPARGSYRISLKKFCKKDYAVQVAVGARGEARGAWTRFPVAVLAVFRSGEERARRGSSALWVPAGDAACGCPRLLPGRRYLLLGGGPGAAAGGAGGRGPGLIAARGSLVLPWRDAWTRRLRRLQRRERRGRCSAA.

The signal sequence occupies residues 1-27 (MPGWPWGLLLTAGTLFAALSPGPPAPA). The region spanning 36–254 (APRGCVPGLV…AATDLQVGGR (219 aa)) is the Laminin N-terminal domain. The interval 62-83 (PATRACDASDPRRAHSPALLTS) is disordered. 15 cysteine pairs are disulfide-bonded: C92/C125, C255/C264, C257/C274, C276/C285, C288/C308, C311/C320, C313/C338, C341/C350, C353/C371, C374/C386, C376/C393, C395/C404, C407/C421, C441/C514, and C460/C577. Residue N104 is glycosylated (N-linked (GlcNAc...) asparagine). Laminin EGF-like domains lie at 255–308 (CKCN…SHAC), 311–371 (CSCN…RRAC), and 374–421 (CDCH…VAPC). Residue N387 is glycosylated (N-linked (GlcNAc...) asparagine). Positions 441-577 (CDSHCKPARG…LQRRERRGRC (137 aa)) constitute an NTR domain. The Cell attachment site; atypical motif lies at 500–502 (RGS).

Spinal cord.

It localises to the secreted. The protein localises to the extracellular space. The protein resides in the extracellular matrix. Its function is as follows. Netrins control guidance of CNS commissural axons and peripheral motor axons. The sequence is that of Netrin-3 (NTN3) from Homo sapiens (Human).